We begin with the raw amino-acid sequence, 304 residues long: Mas-related G-protein coupled receptor member A (304 aa).

Topologically, residues M1–N17 are extracellular. Residues L18–L38 form a helical membrane-spanning segment. The Cytoplasmic portion of the chain corresponds to G39 to A46. Residues F47–I67 traverse the membrane as a helical segment. At D68 to N80 the chain is on the extracellular side. Residues I81 to M101 traverse the membrane as a helical segment. The Cytoplasmic segment spans residues L102–C132. The helical transmembrane segment at S133 to L153 threads the bilayer. At D154–N167 the chain is on the extracellular side. The helical transmembrane segment at F168 to L188 threads the bilayer. At L189–T211 the chain is on the cytoplasmic side. A helical transmembrane segment spans residues V212 to I232. Residues K233–Y244 lie on the Extracellular side of the membrane. Residues L245–V265 traverse the membrane as a helical segment. Residues G266–P304 are Cytoplasmic-facing.

Belongs to the G-protein coupled receptor 1 family. Mas subfamily. As to expression, expressed in a subset of IB4-positive small diameter nociceptive dorsal root neurons.

The protein resides in the cell membrane. Its function is as follows. Orphan receptor activated by a subset of RFamide-family neuropeptides such as FLRF-amide and FMRF-amide. Mediates its action by association with G proteins that activate a phosphatidylinositol-calcium second messenger system. Its effect is mediated by G(q) and G(11) proteins. May regulate the function of nociceptive neurons by modulation of pain perception. The polypeptide is Mas-related G-protein coupled receptor member A (Mrgpra) (Rattus norvegicus (Rat)).